The sequence spans 336 residues: Octanoyltransferase (336 aa).

Residues 1–16 are compositionally biased toward polar residues; sequence MPKSALMSSSFQTSVS. Disordered regions lie at residues 1–22 and 48–88; these read MPKS…PLPV and QGKG…GGGR. The interval 1-92 is unknown; it reads MPKSALMSSS…AAGGGRTIRD (92 aa). Residues 93-336 form a lipB domain region; it reads VKEAAFDVLD…GQEALSVASP (244 aa). The region spanning 124 to 318 is the BPL/LPL catalytic domain; that stretch reads VGGRPTLLLV…AFALTFADYD (195 aa). Residues 170-177, 244-246, and 257-259 each bind substrate; these read RGGDVTYH, SIG, and GIG. Cys275 (acyl-thioester intermediate) is an active-site residue.

The protein in the C-terminal section; belongs to the LipB family.

The protein localises to the cytoplasm. The enzyme catalyses octanoyl-[ACP] + L-lysyl-[protein] = N(6)-octanoyl-L-lysyl-[protein] + holo-[ACP] + H(+). It functions in the pathway protein modification; protein lipoylation via endogenous pathway; protein N(6)-(lipoyl)lysine from octanoyl-[acyl-carrier-protein]: step 1/2. Functionally, catalyzes the transfer of endogenously produced octanoic acid from octanoyl-acyl-carrier-protein onto the lipoyl domains of lipoate-dependent enzymes. Lipoyl-ACP can also act as a substrate although octanoyl-ACP is likely to be the physiological substrate. This Deinococcus radiodurans (strain ATCC 13939 / DSM 20539 / JCM 16871 / CCUG 27074 / LMG 4051 / NBRC 15346 / NCIMB 9279 / VKM B-1422 / R1) protein is Octanoyltransferase.